Consider the following 215-residue polypeptide: ATP phosphoribosyltransferase (215 aa).

Belongs to the ATP phosphoribosyltransferase family. Short subfamily. As to quaternary structure, heteromultimer composed of HisG and HisZ subunits.

Its subcellular location is the cytoplasm. It catalyses the reaction 1-(5-phospho-beta-D-ribosyl)-ATP + diphosphate = 5-phospho-alpha-D-ribose 1-diphosphate + ATP. It participates in amino-acid biosynthesis; L-histidine biosynthesis; L-histidine from 5-phospho-alpha-D-ribose 1-diphosphate: step 1/9. Its function is as follows. Catalyzes the condensation of ATP and 5-phosphoribose 1-diphosphate to form N'-(5'-phosphoribosyl)-ATP (PR-ATP). Has a crucial role in the pathway because the rate of histidine biosynthesis seems to be controlled primarily by regulation of HisG enzymatic activity. The protein is ATP phosphoribosyltransferase of Cyanothece sp. (strain PCC 7425 / ATCC 29141).